Reading from the N-terminus, the 53-residue chain is MLNLLWLVVVLMVIAALLGFGGVVSSLQSVAWFLIVAAVVLAVVGFVTGRRAL.

The next 2 membrane-spanning stretches (helical) occupy residues 4-24 and 32-49; these read LLWL…GGVV and WFLI…FVTG.

Belongs to the UPF0391 family.

It localises to the cell membrane. The polypeptide is UPF0391 membrane protein gsr2640 (Gloeobacter violaceus (strain ATCC 29082 / PCC 7421)).